The following is a 78-amino-acid chain: Nucleocapsid VP1 (78 aa).

In terms of assembly, homodimer.

The protein localises to the virion. Its function is as follows. Completely wraps the viral circular dsDNA genome to form a nucleoprotein filament. These interactions between the viral genome and the nucleocapsid proteins probably maintain the DNA in A-form. This certainly protects the viral DNA under conditions such as the extreme desiccation of its host. This is Nucleocapsid VP1 from Sulfolobus (SPV1).